We begin with the raw amino-acid sequence, 149 residues long: Nucleoside diphosphate kinase (149 aa).

ATP contacts are provided by Lys-9, Phe-57, Arg-85, Thr-91, Arg-102, and Asn-112. His-115 acts as the Pros-phosphohistidine intermediate in catalysis.

The protein belongs to the NDK family. As to quaternary structure, homotetramer. Requires Mg(2+) as cofactor.

The protein resides in the cytoplasm. It carries out the reaction a 2'-deoxyribonucleoside 5'-diphosphate + ATP = a 2'-deoxyribonucleoside 5'-triphosphate + ADP. The enzyme catalyses a ribonucleoside 5'-diphosphate + ATP = a ribonucleoside 5'-triphosphate + ADP. Its function is as follows. Major role in the synthesis of nucleoside triphosphates other than ATP. The ATP gamma phosphate is transferred to the NDP beta phosphate via a ping-pong mechanism, using a phosphorylated active-site intermediate. In Synechocystis sp. (strain ATCC 27184 / PCC 6803 / Kazusa), this protein is Nucleoside diphosphate kinase.